Consider the following 260-residue polypeptide: Sodium channel modifier 1 (260 aa).

The Bipartite nuclear localization signal signature appears at 4–20; the sequence is KRDGDDSSQLNVLKKRR. The Matrin-type zinc finger occupies 42-74; the sequence is YACTVCHHRPVFNTIDMLSVHRTGKKHLGGLQR. The interval 143–260 is disordered; it reads RNVYDPHSGP…EEEPPALPPS (118 aa). The span at 166–187 shows a compositional bias: polar residues; the sequence is PGPSQPHTSLHSPPTGPCSSPT. The segment covering 202-221 has biased composition (basic and acidic residues); it reads KGEEKFRKEIADPERERNME. Over residues 245-254 the composition is skewed to acidic residues; it reads VEFDSDEEEP.

Component of the minor spliceosome, which splices U12-type introns.

It is found in the nucleus. It localises to the nucleoplasm. Its subcellular location is the nucleus speckle. Its function is as follows. As a component of the minor spliceosome, involved in the splicing of U12-type introns in pre-mRNAs. This chain is Sodium channel modifier 1 (scnm1), found in Xenopus laevis (African clawed frog).